Reading from the N-terminus, the 338-residue chain is P2Y purinoceptor 14 (338 aa).

Topologically, residues 1–29 are extracellular; it reads MINSTSTQPPDESCSQNLLITQQIIPVLY. Residue Asn-3 is glycosylated (N-linked (GlcNAc...) asparagine). Residues 30-50 traverse the membrane as a helical segment; that stretch reads CMVFIAGILLNGVSGWIFFYV. Over 51 to 55 the chain is Cytoplasmic; that stretch reads PSSKS. Residues 56–76 traverse the membrane as a helical segment; it reads FIIYLKNIVIADFVMSLTFPF. Residues 77–96 lie on the Extracellular side of the membrane; that stretch reads KILGDSGLGPWQLNVFVCRV. A disulfide bridge links Cys-94 with Cys-172. Residues 97-117 traverse the membrane as a helical segment; sequence SAVLFYVNMYVSIVFFGLISF. Over 118-139 the chain is Cytoplasmic; the sequence is DRYYKIVKPLWTSFIQSVSYSK. Residues 140-160 traverse the membrane as a helical segment; that stretch reads LLSVIVWMLMLLLAVPNIILT. Residue Asn-161 is glycosylated (N-linked (GlcNAc...) asparagine). Residues 161–188 lie on the Extracellular side of the membrane; that stretch reads NQSVREVTQIKCIELKSELGRKWHKASN. Residues 189 to 209 traverse the membrane as a helical segment; the sequence is YIFVAIFWIVFLLLIVFYTAI. The Cytoplasmic portion of the chain corresponds to 210-234; that stretch reads TKKIFKSHLKSSRNSTSVKKKSSRN. Residues 235-255 form a helical membrane-spanning segment; the sequence is IFSIVFVFFVCFVPYHIARIP. The Extracellular portion of the chain corresponds to 256 to 278; sequence YTKSQTEAHYSCQSKEILRYMKE. Residues 279 to 299 traverse the membrane as a helical segment; sequence FTLLLSAANVCLDPIIYFFLC. At 300-338 the chain is on the cytoplasmic side; it reads QPFREILCKKLHIPLKAQNDLDISRIKRGNTTLESTDTL.

Belongs to the G-protein coupled receptor 1 family. As to expression, highest expression in the placenta, adipose tissue, stomach and intestine, intermediate levels in the brain, spleen, lung and heart, lowest levels in the kidney.

The protein resides in the cell membrane. Functionally, receptor for UDP-glucose and other UDP-sugar coupled to G-proteins. Not activated by ATP, ADP, UTP or ATP. The sequence is that of P2Y purinoceptor 14 (P2RY14) from Homo sapiens (Human).